We begin with the raw amino-acid sequence, 348 residues long: D-alanine--D-alanine ligase (348 aa).

An ATP-grasp domain is found at 132–334; sequence KQVLATVGVP…YSDLIEKLVM (203 aa). Residue 162-217 participates in ATP binding; sequence LETLSFPIFVKPANMGSSVGISKATDESSLRSAIDLALKYDSRILIEQGVTAREIE. Asp-288, Glu-301, and Asn-303 together coordinate Mg(2+).

The protein belongs to the D-alanine--D-alanine ligase family. Mg(2+) is required as a cofactor. Requires Mn(2+) as cofactor.

Its subcellular location is the cytoplasm. It carries out the reaction 2 D-alanine + ATP = D-alanyl-D-alanine + ADP + phosphate + H(+). It participates in cell wall biogenesis; peptidoglycan biosynthesis. In terms of biological role, cell wall formation. This Streptococcus agalactiae serotype Ia (strain ATCC 27591 / A909 / CDC SS700) protein is D-alanine--D-alanine ligase.